A 271-amino-acid polypeptide reads, in one-letter code: 5-amino-6-(5-phospho-D-ribitylamino)uracil phosphatase YbjI (271 aa).

Residue Asp9 is the Nucleophile of the active site. Asp9 contributes to the Mg(2+) binding site. Met10 serves as a coordination point for phosphate. Asp11 contacts Mg(2+). Phosphate-binding positions include 44–45 (SG) and Lys192. Asp215 contributes to the Mg(2+) binding site. Asn218 provides a ligand contact to phosphate.

Belongs to the HAD-like hydrolase superfamily. Cof family. Mg(2+) is required as a cofactor. The cofactor is Mn(2+). It depends on Co(2+) as a cofactor. Requires Zn(2+) as cofactor.

The catalysed reaction is 5-amino-6-(5-phospho-D-ribitylamino)uracil + H2O = 5-amino-6-(D-ribitylamino)uracil + phosphate. Its pathway is cofactor biosynthesis; riboflavin biosynthesis; 5-amino-6-(D-ribitylamino)uracil from GTP: step 4/4. Functionally, catalyzes the dephosphorylation of 5-amino-6-(5-phospho-D-ribitylamino)uracil, and thus could be involved in the riboflavin biosynthesis pathway. Is also able to dephosphorylate flavin mononucleotide (FMN), erythrose 4-phosphate and other phosphoric acid esters. The chain is 5-amino-6-(5-phospho-D-ribitylamino)uracil phosphatase YbjI (ybjI) from Escherichia coli (strain K12).